Reading from the N-terminus, the 364-residue chain is DNA polymerase IV (364 aa).

Residues 14–198 form the UmuC domain; the sequence is IIHIDMDAFF…LPIEKFHGVG (185 aa). Residues aspartate 18 and aspartate 116 each coordinate Mg(2+). Glutamate 117 is an active-site residue.

Belongs to the DNA polymerase type-Y family. In terms of assembly, monomer. Mg(2+) is required as a cofactor.

Its subcellular location is the cytoplasm. The catalysed reaction is DNA(n) + a 2'-deoxyribonucleoside 5'-triphosphate = DNA(n+1) + diphosphate. Poorly processive, error-prone DNA polymerase involved in untargeted mutagenesis. Copies undamaged DNA at stalled replication forks, which arise in vivo from mismatched or misaligned primer ends. These misaligned primers can be extended by PolIV. Exhibits no 3'-5' exonuclease (proofreading) activity. May be involved in translesional synthesis, in conjunction with the beta clamp from PolIII. In Streptococcus pyogenes serotype M4 (strain MGAS10750), this protein is DNA polymerase IV.